The following is a 499-amino-acid chain: Maturase K (499 aa).

It belongs to the intron maturase 2 family. MatK subfamily.

Its subcellular location is the plastid. The protein localises to the chloroplast. Usually encoded in the trnK tRNA gene intron. Probably assists in splicing its own and other chloroplast group II introns. The sequence is that of Maturase K from Macrozamia communis (Burrawang palm).